A 78-amino-acid polypeptide reads, in one-letter code: Small integral membrane protein 10-like protein 2A (78 aa).

The chain is Small integral membrane protein 10-like protein 2A from Homo sapiens (Human).